We begin with the raw amino-acid sequence, 176 residues long: Ribosome maturation factor RimP (176 aa).

It belongs to the RimP family.

It is found in the cytoplasm. Required for maturation of 30S ribosomal subunits. The sequence is that of Ribosome maturation factor RimP from Mycolicibacterium vanbaalenii (strain DSM 7251 / JCM 13017 / BCRC 16820 / KCTC 9966 / NRRL B-24157 / PYR-1) (Mycobacterium vanbaalenii).